A 1171-amino-acid chain; its full sequence is DNA polymerase catalytic subunit (1171 aa).

Disordered stretches follow at residues 647-687, 704-735, and 1149-1171; these read GTPA…PFRT, PGGG…EPAP, and VEEE…DSSR. The segment covering 649 to 662 has biased composition (pro residues); it reads PARPPETPARPPET. Composition is skewed to low complexity over residues 663–674 and 709–725; these read PAAGPSGAAHAG and VSSA…PSET. Residues 1149–1158 show a composition bias toward basic and acidic residues; that stretch reads VEEEVCESER.

The protein belongs to the DNA polymerase type-B family.

It is found in the host nucleus. The catalysed reaction is DNA(n) + a 2'-deoxyribonucleoside 5'-triphosphate = DNA(n+1) + diphosphate. The sequence is that of DNA polymerase catalytic subunit (DPOL) from Tupaia belangeri (Common tree shrew).